The chain runs to 75 residues: UPF0352 protein VF_1649 (75 aa).

The protein belongs to the UPF0352 family.

The protein is UPF0352 protein VF_1649 of Aliivibrio fischeri (strain ATCC 700601 / ES114) (Vibrio fischeri).